The sequence spans 427 residues: Serine hydroxymethyltransferase (427 aa).

(6S)-5,6,7,8-tetrahydrofolate contacts are provided by residues L118 and G122–L124. K227 is modified (N6-(pyridoxal phosphate)lysine). S351–F353 contacts (6S)-5,6,7,8-tetrahydrofolate.

The protein belongs to the SHMT family. As to quaternary structure, homodimer. Pyridoxal 5'-phosphate serves as cofactor.

It is found in the cytoplasm. It catalyses the reaction (6R)-5,10-methylene-5,6,7,8-tetrahydrofolate + glycine + H2O = (6S)-5,6,7,8-tetrahydrofolate + L-serine. Its pathway is one-carbon metabolism; tetrahydrofolate interconversion. The protein operates within amino-acid biosynthesis; glycine biosynthesis; glycine from L-serine: step 1/1. Its function is as follows. Catalyzes the reversible interconversion of serine and glycine with tetrahydrofolate (THF) serving as the one-carbon carrier. This reaction serves as the major source of one-carbon groups required for the biosynthesis of purines, thymidylate, methionine, and other important biomolecules. Also exhibits THF-independent aldolase activity toward beta-hydroxyamino acids, producing glycine and aldehydes, via a retro-aldol mechanism. The sequence is that of Serine hydroxymethyltransferase from Thermotoga petrophila (strain ATCC BAA-488 / DSM 13995 / JCM 10881 / RKU-1).